Here is a 204-residue protein sequence, read N- to C-terminus: UPF0637 protein SA0957 (204 aa).

This sequence belongs to the UPF0637 family.

The polypeptide is UPF0637 protein SA0957 (Staphylococcus aureus (strain N315)).